We begin with the raw amino-acid sequence, 346 residues long: tRNA (guanine-N(7)-)-methyltransferase (346 aa).

Residues glycine 101 and 124-125 (EI) contribute to the S-adenosyl-L-methionine site. The interval 149–191 (LKSAGGGGSDAAPESPAAPPTPSEAASPDSTTPSEQQAPTTLV) is disordered. The segment covering 171 to 182 (SEAASPDSTTPS) has biased composition (low complexity). Residues 204-205 (NT) and cysteine 224 contribute to the S-adenosyl-L-methionine site. The active site involves aspartate 227. Position 318 to 320 (318 to 320 (TEE)) interacts with S-adenosyl-L-methionine.

It belongs to the class I-like SAM-binding methyltransferase superfamily. TrmB family. Forms a complex with trm82.

The protein resides in the nucleus. It catalyses the reaction guanosine(46) in tRNA + S-adenosyl-L-methionine = N(7)-methylguanosine(46) in tRNA + S-adenosyl-L-homocysteine. Its pathway is tRNA modification; N(7)-methylguanine-tRNA biosynthesis. Its function is as follows. Catalyzes the formation of N(7)-methylguanine at position 46 (m7G46) in tRNA. This Aspergillus terreus (strain NIH 2624 / FGSC A1156) protein is tRNA (guanine-N(7)-)-methyltransferase (trm8).